A 253-amino-acid chain; its full sequence is uncharacterized protein (253 aa).

The span at 175-184 shows a compositional bias: polar residues; the sequence is NPTQTSPGKP. A disordered region spans residues 175-253; sequence NPTQTSPGKP…ATENEDRLPS (79 aa). At Ser180 the chain carries Phosphoserine. Low complexity-rich tracts occupy residues 185-196 and 203-214; these read STSESSQTDTST and TPTTTRASSYTT. Positions 215–242 are enriched in polar residues; it reads LVSTSNQVSNEAEASAVETSANQAQNTE.

This sequence belongs to the TRAPP small subunits family. BET3 subfamily.

This is an uncharacterized protein from Schizosaccharomyces pombe (strain 972 / ATCC 24843) (Fission yeast).